Consider the following 536-residue polypeptide: Fanconi anemia group E protein (536 aa).

Positions Met-150–Arg-371 are interaction with FANCC. Positions Leu-171 to Lys-252 are disordered. Residues Glu-230 to Leu-239 are compositionally biased toward basic and acidic residues. Residue Ser-249 is modified to Phosphoserine. Thr-346 carries the phosphothreonine; by CHEK1 modification. Residue Ser-374 is modified to Phosphoserine; by CHEK1.

Belongs to the multisubunit FA complex composed of FANCA, FANCB, FANCC, FANCE, FANCF, FANCG, FANCL/PHF9 and FANCM. The complex is not found in FA patients. Interacts with FANCC and FANCD2. In terms of processing, phosphorylated. Phosphorylation by CHEK1 at Thr-346 and Ser-374 regulates its function in DNA cross-links repair. Post-translationally, ubiquitinated. Phosphorylation by CHEK1 induces polyubiquitination and degradation.

The protein localises to the nucleus. Its function is as follows. As part of the Fanconi anemia (FA) complex functions in DNA cross-links repair. Required for the nuclear accumulation of FANCC and provides a critical bridge between the FA complex and FANCD2. The sequence is that of Fanconi anemia group E protein (FANCE) from Homo sapiens (Human).